The following is a 58-amino-acid chain: Small ribosomal subunit protein bS21 (58 aa).

The interval 28–58 is disordered; the sequence is VLQDIRKHEHYEKPSIKKKKKSEAARKKKRF. Residues 31-42 are compositionally biased toward basic and acidic residues; sequence DIRKHEHYEKPS. Residues 43–58 show a composition bias toward basic residues; the sequence is IKKKKKSEAARKKKRF.

The protein belongs to the bacterial ribosomal protein bS21 family.

The protein is Small ribosomal subunit protein bS21 of Syntrophomonas wolfei subsp. wolfei (strain DSM 2245B / Goettingen).